We begin with the raw amino-acid sequence, 313 residues long: Testis-expressed protein 264 (313 aa).

At 1 to 6 the chain is on the lumenal side; the sequence is MSDLLL. Residues 7-31 traverse the membrane as a helical; Signal-anchor for type III membrane protein segment; sequence LGLIGGLTLLLLLTLLAFAGYSGLL. The Cytoplasmic portion of the chain corresponds to 32–313; the sequence is AGVEVSAGSP…EPTAPEKGKE (282 aa). A disordered region spans residues 193-313; sequence PEMKETEWKW…EPTAPEKGKE (121 aa). The segment covering 219–247 has biased composition (polar residues); that stretch reads DTMSDTSSVSLEVSPGSRETSAATLSPGA. Phosphoserine is present on residues Ser239 and Ser244. A compositionally biased stretch (basic and acidic residues) spans 251-263; it reads GWDDGDTRSEHSY. The span at 264-273 shows a compositional bias: low complexity; it reads SESGASGSSF. The LIR motif signature appears at 273–276; it reads FEEL.

Interacts (via the LIR motif) with ATG8 family proteins MAP1LC3A, MAP1LC3B, GABARAP and GABARAPL1. Interacts with VCP/p97; bridging VCP/p97 to covalent DNA-protein cross-links (DPCs). Interacts with TOP1 (when sumoylated).

Its subcellular location is the endoplasmic reticulum membrane. It localises to the cytoplasmic vesicle. The protein resides in the autophagosome. It is found in the cytoplasm. The protein localises to the cytosol. Its subcellular location is the nucleus. It localises to the chromosome. Functionally, major reticulophagy (also called ER-phagy) receptor that acts independently of other candidate reticulophagy receptors to remodel subdomains of the endoplasmic reticulum into autophagosomes upon nutrient stress, which then fuse with lysosomes for endoplasmic reticulum turnover. The ATG8-containing isolation membrane (IM) cradles a tubular segment of TEX264-positive ER near a three-way junction, allowing the formation of a synapse of 2 juxtaposed membranes with trans interaction between the TEX264 and ATG8 proteins. Expansion of the IM would extend the capture of ER, possibly through a 'zipper-like' process involving continued trans TEX264-ATG8 interactions, until poorly understood mechanisms lead to the fission of relevant membranes and, ultimately, autophagosomal membrane closure. Also involved in the repair of covalent DNA-protein cross-links (DPCs) during DNA synthesis: acts by bridging VCP/p97 to covalent DNA-protein cross-links (DPCs) and initiating resolution of DPCs by SPRTN. In Homo sapiens (Human), this protein is Testis-expressed protein 264.